The following is a 207-amino-acid chain: Small ribosomal subunit protein uS4 (207 aa).

The tract at residues 31–53 (KAKFDSKPGQHGRTSGARTSDYG) is disordered. Residues 97 to 157 (CRLDNVVYRM…EKSKKQARIV (61 aa)) form the S4 RNA-binding domain.

This sequence belongs to the universal ribosomal protein uS4 family. Part of the 30S ribosomal subunit. Contacts protein S5. The interaction surface between S4 and S5 is involved in control of translational fidelity.

In terms of biological role, one of the primary rRNA binding proteins, it binds directly to 16S rRNA where it nucleates assembly of the body of the 30S subunit. Its function is as follows. With S5 and S12 plays an important role in translational accuracy. The protein is Small ribosomal subunit protein uS4 of Acidovorax ebreus (strain TPSY) (Diaphorobacter sp. (strain TPSY)).